A 64-amino-acid chain; its full sequence is Probable spore germination protein GerPD (64 aa).

Its function is as follows. Required for the formation of functionally normal spores. Could be involved in the establishment of normal spore coat structure and/or permeability, which allows the access of germinants to their receptor. This chain is Probable spore germination protein GerPD (gerPD), found in Bacillus cereus.